The following is a 479-amino-acid chain: Calcium/calmodulin-dependent protein kinase type II delta chain (479 aa).

In terms of domain architecture, Protein kinase spans Y14 to I272. ATP is bound by residues L20 to V28 and K43. D136 serves as the catalytic Proton acceptor. The residue at position 287 (T287) is a Phosphothreonine. S315 and S319 each carry phosphoserine. T337 bears the Phosphothreonine mark.

This sequence belongs to the protein kinase superfamily. CAMK Ser/Thr protein kinase family. CaMK subfamily. CAMK2 is composed of four different chains: alpha, beta, gamma, and delta. The different isoforms assemble into homo- or heteromultimeric holoenzymes composed of 8 to 12 subunits.

The catalysed reaction is L-seryl-[protein] + ATP = O-phospho-L-seryl-[protein] + ADP + H(+). It catalyses the reaction L-threonyl-[protein] + ATP = O-phospho-L-threonyl-[protein] + ADP + H(+). Autophosphorylation of CAMK2 plays an important role in the regulation of the kinase activity. CaM-kinase II (CAMK2) is a prominent kinase in the central nervous system. In Gallus gallus (Chicken), this protein is Calcium/calmodulin-dependent protein kinase type II delta chain (CAMK2D).